The sequence spans 266 residues: Putative cysteine-rich repeat secretory protein 20 (266 aa).

Residues 1-33 (MYFPPSSVPKRLVLVHISAVVAIKLLLIRSVSS) form the signal peptide. Gnk2-homologous domains are found at residues 40–142 (YLQH…SIRN) and 148–261 (YNNN…LYPF).

The protein belongs to the cysteine-rich repeat secretory protein family.

The protein localises to the secreted. This Arabidopsis thaliana (Mouse-ear cress) protein is Putative cysteine-rich repeat secretory protein 20 (CRRSP20).